Here is a 276-residue protein sequence, read N- to C-terminus: MATLATKKATLVAALKDLQRVTVAFSGGIDSTLVLKMALDVLGRDNVTAVVANSELFTDEEFDKAMSLAEELGANVQGTTLDYLSDDHIKNNTPDSWYYAKKMFYSRLNDIAANNGSAAVLDGMIKNDENDYRPGLKARSEAGARSLLQEADFFKTDVRALAQELGLTNWNKVASCSVSSRFPYGTTLTHDNIAQVMAAEKYLRSLGFPTVRVRFHNDIARIELPEARIGDFLVFNDRVNRQLQSLGFRYVTLDLGGFRSGRMNDTLTKAQLATFA.

Cys176 functions as the Nucleophile and sulfur donor in the catalytic mechanism. Cys176 bears the 2,3-didehydroalanine (Cys) mark.

It belongs to the LarE family.

The enzyme catalyses pyridinium-3,5-dicarboxylate mononucleotide + [LarE protein]-L-cysteine + ATP = [LarE protein]-dehydroalanine + pyridinium-3-carboxylate-5-thiocarboxylate mononucleotide + AMP + diphosphate + H(+). It catalyses the reaction [LarE protein]-L-cysteine + pyridinium-3-carboxylate-5-thiocarboxylate mononucleotide + ATP = pyridinium-3,5-bisthiocarboxylate mononucleotide + [LarE protein]-dehydroalanine + AMP + diphosphate + H(+). Its function is as follows. Involved in the biosynthesis of a nickel-pincer cofactor ((SCS)Ni(II) pincer complex). Catalyzes the ATP-dependent incorporation of two sulfur atoms in pyridinium-3,5-biscarboxylic acid mononucleotide (P2CMN) to yield pyridinium-3,5-bisthiocarboxylic acid mononucleotide (P2TMN). The source of sulfur is the enzyme itself: Cys-176 of LarE is the sulfur donor, thereby being converted into dehydroalanine, and is not regenerated in vivo. Thus, two molecules of LarE undergo sacrificial sulfur transfer to create one P2TMN. Binds nickel. Is required for the activation of the lactate racemase LarA. May also be involved in the activation of other nickel-pincer cofactor-dependent enzymes. In Lactiplantibacillus plantarum (strain ATCC BAA-793 / NCIMB 8826 / WCFS1) (Lactobacillus plantarum), this protein is Pyridinium-3,5-bisthiocarboxylic acid mononucleotide synthase.